The sequence spans 388 residues: Riboflavin biosynthesis protein RibBA (388 aa).

Residues 1 to 186 (MEELREAFEE…MDDVWREFVK (186 aa)) are DHBP synthase. Residues 21-22 (RE), Asp26, 125-129 (RKGHT), and Glu149 each bind D-ribulose 5-phosphate. Glu22 contacts Mg(2+). His128 serves as a coordination point for Mg(2+). Positions 187-388 (RKLLMKKKAE…LEEIFREVNS (202 aa)) are GTP cyclohydrolase II. Residue 235–239 (RIHSE) participates in GTP binding. 3 residues coordinate Zn(2+): Cys240, Cys251, and Cys253. GTP-binding positions include Gln256, 277-279 (EGR), and Thr299. Residue Asp311 is the Proton acceptor; for GTP cyclohydrolase activity of the active site. Arg313 serves as the catalytic Nucleophile; for GTP cyclohydrolase activity. The GTP site is built by Thr334 and Lys339.

In the N-terminal section; belongs to the DHBP synthase family. The protein in the C-terminal section; belongs to the GTP cyclohydrolase II family. Mg(2+) is required as a cofactor. Requires Mn(2+) as cofactor. It depends on Zn(2+) as a cofactor.

The enzyme catalyses D-ribulose 5-phosphate = (2S)-2-hydroxy-3-oxobutyl phosphate + formate + H(+). It carries out the reaction GTP + 4 H2O = 2,5-diamino-6-hydroxy-4-(5-phosphoribosylamino)-pyrimidine + formate + 2 phosphate + 3 H(+). It participates in cofactor biosynthesis; riboflavin biosynthesis; 2-hydroxy-3-oxobutyl phosphate from D-ribulose 5-phosphate: step 1/1. It functions in the pathway cofactor biosynthesis; riboflavin biosynthesis; 5-amino-6-(D-ribitylamino)uracil from GTP: step 1/4. Its function is as follows. Catalyzes the conversion of D-ribulose 5-phosphate to formate and 3,4-dihydroxy-2-butanone 4-phosphate. Functionally, catalyzes the conversion of GTP to 2,5-diamino-6-ribosylamino-4(3H)-pyrimidinone 5'-phosphate (DARP), formate and pyrophosphate. The protein is Riboflavin biosynthesis protein RibBA of Thermotoga maritima (strain ATCC 43589 / DSM 3109 / JCM 10099 / NBRC 100826 / MSB8).